The sequence spans 163 residues: Transcriptional repressor NrdR (163 aa).

Residues 3–34 (CPFCRHPDSRVVDSRVSDDGSSIRRRRQCPQC) fold into a zinc finger. Positions 46–136 (LTVIKRSGIG…VYQAFESLDD (91 aa)) constitute an ATP-cone domain.

Belongs to the NrdR family. It depends on Zn(2+) as a cofactor.

In terms of biological role, negatively regulates transcription of bacterial ribonucleotide reductase nrd genes and operons by binding to NrdR-boxes. This Renibacterium salmoninarum (strain ATCC 33209 / DSM 20767 / JCM 11484 / NBRC 15589 / NCIMB 2235) protein is Transcriptional repressor NrdR.